Consider the following 134-residue polypeptide: Secreted RxLR effector protein 1 (134 aa).

A signal peptide spans 1-22 (MFCRSPLVAVILLVLATHIVLA). The segment at 32 to 60 (SETVPSDSSQTTRKSTRRTTSVDNKRRLR) is disordered. Low complexity predominate over residues 37–52 (SDSSQTTRKSTRRTTS). The short motif at 57–79 (RRLRQQIMGKDGPVVNDVHAEER) is the RxLR-dEER element.

Belongs to the RxLR effector family.

It is found in the secreted. The protein resides in the host nucleus. Functionally, effector that acts as a broad suppressor of cell death to interrupt plant immunity. Inhibits cell death induced by cell death-inducing proteins, including the PAMP elicitor INF1 from P.infestans. In Plasmopara viticola (Downy mildew of grapevine), this protein is Secreted RxLR effector protein 1.